A 145-amino-acid chain; its full sequence is Large ribosomal subunit protein uL11 (145 aa).

Belongs to the universal ribosomal protein uL11 family. In terms of assembly, part of the ribosomal stalk of the 50S ribosomal subunit. Interacts with L10 and the large rRNA to form the base of the stalk. L10 forms an elongated spine to which L12 dimers bind in a sequential fashion forming a multimeric L10(L12)X complex. In terms of processing, one or more lysine residues are methylated.

In terms of biological role, forms part of the ribosomal stalk which helps the ribosome interact with GTP-bound translation factors. This chain is Large ribosomal subunit protein uL11, found in Coxiella burnetii (strain CbuK_Q154) (Coxiella burnetii (strain Q154)).